Consider the following 175-residue polypeptide: NADH-quinone oxidoreductase subunit B (175 aa).

Residues C49, C50, C115, and C145 each coordinate [4Fe-4S] cluster.

This sequence belongs to the complex I 20 kDa subunit family. In terms of assembly, NDH-1 is composed of 14 different subunits. Subunits NuoB, C, D, E, F, and G constitute the peripheral sector of the complex. The cofactor is [4Fe-4S] cluster.

The protein localises to the cell membrane. It carries out the reaction a quinone + NADH + 5 H(+)(in) = a quinol + NAD(+) + 4 H(+)(out). In terms of biological role, NDH-1 shuttles electrons from NADH, via FMN and iron-sulfur (Fe-S) centers, to quinones in the respiratory chain. The immediate electron acceptor for the enzyme in this species is believed to be a menaquinone. Couples the redox reaction to proton translocation (for every two electrons transferred, four hydrogen ions are translocated across the cytoplasmic membrane), and thus conserves the redox energy in a proton gradient. The sequence is that of NADH-quinone oxidoreductase subunit B from Heliobacterium modesticaldum (strain ATCC 51547 / Ice1).